Here is a 501-residue protein sequence, read N- to C-terminus: TNF receptor-associated factor 2 (501 aa).

Alanine 2 carries the post-translational modification N-acetylalanine. Serine 5 is modified (phosphoserine). Position 7 is a phosphothreonine (threonine 7). Serine 11 is subject to Phosphoserine. Residue threonine 22 is modified to Phosphothreonine. Residue lysine 31 forms a Glycyl lysine isopeptide (Lys-Gly) (interchain with G-Cter in ubiquitin) linkage. The segment at 34 to 73 (CSACKNILRRPFQAQCGHRYCSFCLTSILSSGPQNCAACV) adopts an RING-type zinc-finger fold. Position 117 is a phosphothreonine; by PKC (threonine 117). 2 TRAF-type zinc fingers span residues 124–180 (CHEG…VHYE) and 177–233 (VHYE…ENLQ). The important for interaction with BIRC2 and BIRC3 stretch occupies residues 283-293 (ENIVCVLNREV). A coiled-coil region spans residues 298–348 (VTAEACSRQHRLDQDKIEALSNKVQQLERSIGLKDLAMADLEQKVSELEVS). Residue lysine 320 forms a Glycyl lysine isopeptide (Lys-Gly) (interchain with G-Cter in ubiquitin) linkage. An MATH domain is found at 351–496 (DGVFIWKISD…DDAIFIKAIV (146 aa)).

This sequence belongs to the TNF receptor-associated factor family. A subfamily. Homotrimer. Heterotrimer with TRAF1. Heterotrimer with TRAF3 (via TRAF domain). The domain containing the RING-type and the first TRAF-type zinc finger can also form homodimers (in vitro). Interacts with TNFRSF1B/TNFR2. Interacts with TNFRSF5/CD40. Interacts with TNFRSF4, TNFRSF7/CD27, TNFRSF8/CD30, TNFRSF9/CD137, TNFRSF11A/RANK, TNFRSF13B/TACI, TNFRSF14, TNFRSF16/NGFR, TNFRSF17/BCMA, TNFRSF18/AITR, TNFRSF19/TROY, TNFRSF19L/RELT and EDAR. Stimulation of TNF-alpha receptor TNFRSF1A leads to the formation of two distinct signaling complexes. Plasma membrane-bound complex I is composed of TNFRSF1A, TRADD, RIPK1, TRAF2 and BIRC2/c-IAP1 or BIRC3 which interacts with CHUCK/IKK-alpha, IKBKB/IKK-beta and IKBKG/IKK-gamma promoting cell survival. Subsequently, TRADD, RIPK1 and TRAF2 dissociate from TNFRSF1A and form cytoplasmic complex II with FADD and caspase CASP8 promoting cell apoptosis. Interacts with TRADD. Identified in a complex with TNFRSF1A, RIPK1 and IKBKB/IKK-beta. Interacts with RIPK2. Interacts with BIRC2 and BIRC3 N-terminus; a single BIRC2 or BIRC3 molecule interacts with a heterotrimer formed by TRAF1 and TRAF2, or a TRAF2 homotrimer. Identified in a complex composed of TRAF2, TRAF3, BIRC2 and BIRC3. Interacts with BIRC2; the interaction promotes BIRC2 stability. Interaction with BIRC2 and/or BIRC3 is essential for ubiquitination of IKBKE, degradation of NFKBIA and activation of NF-kappa-B. Within complex I, phosphorylated TRAF2 interacts (via 'Lys-63'-linked polyubiquitin chains) with CHUCK/IKK-alpha, IKBKB/IKK-beta, IKBKG/IKK-gamma TAB2, TAB3 and TAK1 in response to TNF-alpha stimulation. Within complex I, interacts with UXT isoform 1 (via TPQE motif); the interaction prevents the recruitment of FADD and CASP8/caspase 8 to complex I. Forms a complex composed of TNFRSF8/CD30 or TNFRSF1B/TNFR2, and TRAF1, TRAF2 and E3 ligase TRAIP. Within the complex, interacts with TRAIP; the interaction inhibits TRAF2-mediated NF-kappa B activation. Component of a complex composed of TANK and TBK1. Interacts with TRPC4AP. Interacts with MAP3K1/MEKK1, MAP3K5/ASK1 and MAP3K11/MLK3 in response to TNF-alpha stimulation; the interaction leads to JNK activation and interaction with MAP3K5 is inhibited by PRMT1. Component of a complex composed of MAP3K14/NIK BIRC3 and TRAF3; the interaction leads to BIRC2/3-mediated ubiquitination of TRAF3 upon CD40 engagement in a TRAF2-dependent manner. Interacts with MAP3K14/NIK in response to TNF-alpha stimulation; the interaction leads to NF-kappa B activation. Interacts with PEG3; the interaction may promote TRAF2-mediated NF-kappa B activation. Interacts with HIVEP3; the interaction may inhibit TNF-alpha-TRAF2-mediated NF-kappa B and JNK activation. Interacts with TANK/ITRAF; the interaction prevents interaction between TNFRSF1B/TNFR2 and TRAF2. Interacts with deubiquitinating enzyme CYLD; the interaction results in the deubiquitination and inactivation of TRAF2. Interacts with SIAH2; the interaction leads to TRAF2 ubiquitination and degradation. Interacts with E2 conjugating enzyme UBE2N/Ubc13, E3 ligase ITCH and RNF11 in response to TNF-alpha stimulation. Interacts with ubiquitin-editing enzyme TNFAIP3/A20 in response to TNF-alpha stimulation; the interaction promotes TRAF2 dissociation from UBE2N/Ubc13, ITCH, RNF11 and TAX1BP1 and prevents prolonged TRAF-2 ubiquitination. Interacts with TAX1BP1 in response to TNF-alpha stimulation; the interaction promotes TRAF2 dissociation from UBE2N/Ubc13 and TNFAIP3/A20, and prevents prolonged TRAF-2 ubiquitination. Interacts (via C-terminus) with EIF2AK2/PKR (via the kinase catalytic domain). Interacts with deubiquitinating enzyme USP48. Interacts with PTPN2; probably involved in TNF-mediated signaling. Interacts with Toll-like receptor TLR4/3 adapter TICAM1/TRIF; the interaction may promote TICAM1 ubiquitination. Interacts with kinase/endoribonuclease ERN1/IRE1 and DAB2IP in response to ER stress; the interaction requires DAB2IP. Interacts with ERN1/IRE1 and TAOK3 in response to ER stress; the interaction may promote TRAF2 phosphorylation. Interacts (via zinc fingers) with DAB2IP (via C-terminus PER domain) in response to TNF-alpha stimulation. Interacts with CASP8AP2/FLASH. Interacts with NFATC2IP; the interaction may repress IL-4 production in T cells. Interacts with kinase CDK9. Interacts with sphingosine kinase 1 SPHK1. Interacts with kinase TNIK. Interacts with TRAFD1. Interacts with DNA phosphodiesterase TDP2. Interacts with MAVS/IPS1. Interacts with CARD14. Interacts with GPS2. Interacts with XPNPEP3. Interacts with RIPK3. Interacts with RELL2. Interacts with LRRC19. Interacts with GAPDH; promoting TRAF2 ubiquitination. Phosphorylated at several serine residues within the first 128 amino acid residues. Phosphorylated at Thr-117 in response to signaling via TNF and TNFRSF1A. Phosphorylation at Thr-117 is required for 'Lys-63'-linked polyubiquitination, but not for 'Lys-48'-linked polyubiquitination. Phosphorylation at Thr-117 is important for interaction with IKKA and IKKB, activation of IKK and subsequent activation of NF-kappa-B. Post-translationally, undergoes both 'Lys-48'-linked and 'Lys-63'-linked polyubiquitination. Polyubiquitinated via 'Lys-63'-linked ubiquitin in response to TNF signaling; this requires prior phosphorylation at Thr-117. 'Lys-63'-linked polyubiquitination promotes TRAF2-mediated activation of NF-kappa-B. Can be polyubiquitinated at several Lys residues via 'Lys-48'-linked ubiquitin chains in response to TNF signaling, leading to proteasomal degradation. Autoubiquitinated, leading to its subsequent proteasomal degradation. Polyubiquitinated by BIRC2 and SIAH2, leading to its subsequent proteasomal degradation. Not ubiquitinated by BIRC3 or SIAH1. Deubiquitinated by CYLD, a protease that specifically cleaves 'Lys-63'-linked polyubiquitin chains. Ubiquination is inhibited by LRRC19; inhiits proteasomal degradation. Ubiquitinated at Lys-320 by the SCF(FBXL2) complex, leading to its degradation by the proteasome. Ubiquitinated by E3 ubiquitin-protein ligase complex containing FBXO7; leading to repression of NF-kappa-B signaling. In terms of tissue distribution, isoform 1 and isoform 2 are expressed in spleen, adipose tissues, skeletal muscles, thymus, testis, heart, lung, brain. Isoform 2 is very weakly expressed in heart, lung and brain.

Its subcellular location is the cytoplasm. It carries out the reaction S-ubiquitinyl-[E2 ubiquitin-conjugating enzyme]-L-cysteine + [acceptor protein]-L-lysine = [E2 ubiquitin-conjugating enzyme]-L-cysteine + N(6)-ubiquitinyl-[acceptor protein]-L-lysine.. It functions in the pathway protein modification; protein ubiquitination. Its activity is regulated as follows. Has very low E3 ubiquitin ligase activity in the absence of sphingosine-1-phosphate. E3 ubiquitin ligase activity is strongly activated by cytoplasmic sphingosine-1-phosphate. Functionally, E3 ubiquitin-protein ligase that regulates activation of NF-kappa-B and JNK and plays a central role in the regulation of cell survival and apoptosis. Catalyzes 'Lys-63'-linked ubiquitination of target proteins, such as BIRC3, IKBKE, MLST8, RIPK1 and TICAM1. Is an essential constituent of several E3 ubiquitin-protein ligase complexes, where it promotes the ubiquitination of target proteins by bringing them into contact with other E3 ubiquitin ligases. Regulates BIRC2 and BIRC3 protein levels by inhibiting their autoubiquitination and subsequent degradation; this does not depend on the TRAF2 RING-type zinc finger domain. Plays a role in mediating activation of NF-kappa-B by EIF2AK2/PKR. In complex with BIRC2 or BIRC3, promotes ubiquitination of IKBKE. Acts as a regulator of mTORC1 and mTORC2 assembly by mediating 'Lys-63'-linked ubiquitination of MLST8, thereby inhibiting formation of the mTORC2 complex, while facilitating assembly of the mTORC1 complex. Required for normal antibody isotype switching from IgM to IgG. In Mus musculus (Mouse), this protein is TNF receptor-associated factor 2 (Traf2).